A 261-amino-acid polypeptide reads, in one-letter code: Cytochrome c oxidase subunit 3 (261 aa).

Topologically, residues 1 to 15 (MTHQTHAYHMVNPSP) are mitochondrial matrix. Residues 16-34 (WPLTGALSALLMTSGLIMW) traverse the membrane as a helical segment. Topologically, residues 35–40 (FHFNST) are mitochondrial intermembrane. A helical transmembrane segment spans residues 41–66 (TLLMLGLTTNMLTMYQWWRDVVREST). The Mitochondrial matrix portion of the chain corresponds to 67–72 (FQGHHT). Residues 73–105 (PNVQKGLRYGMILFIISEVLFFTGFFWAFYHSS) traverse the membrane as a helical segment. Residues 106 to 128 (LAPTPELGGCWPPTGINPLNPLE) lie on the Mitochondrial intermembrane side of the membrane. A helical membrane pass occupies residues 129–152 (VPLLNTSVLLASGVSITWAHHSLM). Residues 153 to 155 (EGN) are Mitochondrial matrix-facing. Residues 156–183 (RNHMLQALFITIALGVYFTLLQASEYYE) form a helical membrane-spanning segment. The Mitochondrial intermembrane portion of the chain corresponds to 184 to 190 (APFTISD). The chain crosses the membrane as a helical span at residues 191–223 (GVYGSTFFVATGFHGLHVIIGSTFLIVCFFRQL). Residues 224–232 (KFHFTSNHH) lie on the Mitochondrial matrix side of the membrane. A helical transmembrane segment spans residues 233 to 256 (FGFEAAAWYWHFVDVVWLFLYVSI). Residues 257-261 (YWWGS) are Mitochondrial intermembrane-facing.

Belongs to the cytochrome c oxidase subunit 3 family. Component of the cytochrome c oxidase (complex IV, CIV), a multisubunit enzyme composed of 14 subunits. The complex is composed of a catalytic core of 3 subunits MT-CO1, MT-CO2 and MT-CO3, encoded in the mitochondrial DNA, and 11 supernumerary subunits COX4I, COX5A, COX5B, COX6A, COX6B, COX6C, COX7A, COX7B, COX7C, COX8 and NDUFA4, which are encoded in the nuclear genome. The complex exists as a monomer or a dimer and forms supercomplexes (SCs) in the inner mitochondrial membrane with NADH-ubiquinone oxidoreductase (complex I, CI) and ubiquinol-cytochrome c oxidoreductase (cytochrome b-c1 complex, complex III, CIII), resulting in different assemblies (supercomplex SCI(1)III(2)IV(1) and megacomplex MCI(2)III(2)IV(2)).

Its subcellular location is the mitochondrion inner membrane. It carries out the reaction 4 Fe(II)-[cytochrome c] + O2 + 8 H(+)(in) = 4 Fe(III)-[cytochrome c] + 2 H2O + 4 H(+)(out). Functionally, component of the cytochrome c oxidase, the last enzyme in the mitochondrial electron transport chain which drives oxidative phosphorylation. The respiratory chain contains 3 multisubunit complexes succinate dehydrogenase (complex II, CII), ubiquinol-cytochrome c oxidoreductase (cytochrome b-c1 complex, complex III, CIII) and cytochrome c oxidase (complex IV, CIV), that cooperate to transfer electrons derived from NADH and succinate to molecular oxygen, creating an electrochemical gradient over the inner membrane that drives transmembrane transport and the ATP synthase. Cytochrome c oxidase is the component of the respiratory chain that catalyzes the reduction of oxygen to water. Electrons originating from reduced cytochrome c in the intermembrane space (IMS) are transferred via the dinuclear copper A center (CU(A)) of subunit 2 and heme A of subunit 1 to the active site in subunit 1, a binuclear center (BNC) formed by heme A3 and copper B (CU(B)). The BNC reduces molecular oxygen to 2 water molecules using 4 electrons from cytochrome c in the IMS and 4 protons from the mitochondrial matrix. This chain is Cytochrome c oxidase subunit 3 (MT-CO3), found in Gazella leptoceros (Sand gazelle).